A 354-amino-acid polypeptide reads, in one-letter code: Ubiquinol oxidase 1a, mitochondrial (354 aa).

The N-terminal 62 residues, 1-62 (MMITRGGAKA…RAPTIGGMRF (62 aa)), are a transit peptide targeting the mitochondrion. The interval 68 to 99 (LGEKTPMKEEDANQKKTENESTGGDAAGGNNK) is disordered. The span at 72–86 (TPMKEEDANQKKTEN) shows a compositional bias: basic and acidic residues. Residues 179–199 (AMMLETVAAVPGMVGGMLLHC) traverse the membrane as a helical segment. Fe cation contacts are provided by E183, E222, and H225. A helical transmembrane segment spans residues 241-261 (ALVITVQGVFFNAYFLGYLIS). 3 residues coordinate Fe cation: E273, E324, and H327.

This sequence belongs to the alternative oxidase family. In terms of assembly, homodimer; disulfide-linked. Fe cation serves as cofactor. As to expression, expressed in roots, stems, cotyledons, leaves and flowers. High expression in sepals.

Its subcellular location is the mitochondrion inner membrane. It catalyses the reaction 2 a ubiquinol + O2 = 2 a ubiquinone + 2 H2O. When the two monomeric subunits are covalently linked by a S-S bond, the enzyme is essentially inactive. When the disulfide bond is reduced, its component sulfhydryls can associate with K-keto acids through formation of a thiohemiacetal, resulting in enzyme activation. Activated by glyoxylate, irrespective to the substitution found at Cys-127. That suggests the presence of a second activation site, possibly Cys-177. In terms of biological role, catalyzes the cyanide-resistant oxidation of ubiquinol and the reduction of molecular oxygen to water, but does not translocate protons and consequently is not linked to oxidative phosphorylation. Increases respiration when the cytochrome respiratory pathway is restricted, or in response to low temperatures. The polypeptide is Ubiquinol oxidase 1a, mitochondrial (AOX1A) (Arabidopsis thaliana (Mouse-ear cress)).